Reading from the N-terminus, the 357-residue chain is tRNA/tmRNA (uracil-C(5))-methyltransferase (357 aa).

Positions 180, 209, 214, 230, and 290 each coordinate S-adenosyl-L-methionine. Cysteine 315 acts as the Nucleophile in catalysis. The active-site Proton acceptor is the glutamate 349.

Belongs to the class I-like SAM-binding methyltransferase superfamily. RNA M5U methyltransferase family. TrmA subfamily.

It carries out the reaction uridine(54) in tRNA + S-adenosyl-L-methionine = 5-methyluridine(54) in tRNA + S-adenosyl-L-homocysteine + H(+). The enzyme catalyses uridine(341) in tmRNA + S-adenosyl-L-methionine = 5-methyluridine(341) in tmRNA + S-adenosyl-L-homocysteine + H(+). Functionally, dual-specificity methyltransferase that catalyzes the formation of 5-methyluridine at position 54 (m5U54) in all tRNAs, and that of position 341 (m5U341) in tmRNA (transfer-mRNA). The polypeptide is tRNA/tmRNA (uracil-C(5))-methyltransferase (Campylobacter jejuni subsp. jejuni serotype O:23/36 (strain 81-176)).